An 897-amino-acid polypeptide reads, in one-letter code: Beta-galactosidase (897 aa).

E459 acts as the Proton donor in catalysis. E525 acts as the Nucleophile in catalysis.

It belongs to the glycosyl hydrolase 2 family.

The catalysed reaction is Hydrolysis of terminal non-reducing beta-D-galactose residues in beta-D-galactosides.. The polypeptide is Beta-galactosidase (cbgA) (Clostridium acetobutylicum).